The sequence spans 257 residues: Indole-3-glycerol phosphate synthase (257 aa).

The protein belongs to the TrpC family.

It catalyses the reaction 1-(2-carboxyphenylamino)-1-deoxy-D-ribulose 5-phosphate + H(+) = (1S,2R)-1-C-(indol-3-yl)glycerol 3-phosphate + CO2 + H2O. It participates in amino-acid biosynthesis; L-tryptophan biosynthesis; L-tryptophan from chorismate: step 4/5. The polypeptide is Indole-3-glycerol phosphate synthase (Chlorobium chlorochromatii (strain CaD3)).